The primary structure comprises 405 residues: Argininosuccinate synthase (405 aa).

An ATP-binding site is contributed by 11-19 (AYSGGLDTS). Tyrosine 90 is an L-citrulline binding site. Glycine 119 provides a ligand contact to ATP. Residues threonine 121, asparagine 125, and aspartate 126 each contribute to the L-aspartate site. An L-citrulline-binding site is contributed by asparagine 125. Residues arginine 129, serine 178, serine 187, glutamate 263, and tyrosine 275 each contribute to the L-citrulline site.

This sequence belongs to the argininosuccinate synthase family. Type 1 subfamily. In terms of assembly, homotetramer.

The protein localises to the cytoplasm. The catalysed reaction is L-citrulline + L-aspartate + ATP = 2-(N(omega)-L-arginino)succinate + AMP + diphosphate + H(+). It participates in amino-acid biosynthesis; L-arginine biosynthesis; L-arginine from L-ornithine and carbamoyl phosphate: step 2/3. In Legionella pneumophila (strain Corby), this protein is Argininosuccinate synthase.